Consider the following 609-residue polypeptide: Replication factor A protein 1 (609 aa).

Residues 130–152 show a composition bias toward polar residues; that stretch reads QNEQNNASAPRTGISTSTNSFYG. The disordered stretch occupies residues 130-166; it reads QNEQNNASAPRTGISTSTNSFYGNNAAATAPAPPPMM. Positions 192 to 278 form a DNA-binding region, OB; that stretch reads WTIRARVTNK…NEYELMFERD (87 aa). The segment at 477-498 adopts a C4-type zinc-finger fold; it reads CPAADCNKKVFDQGGSWRCEKC.

Belongs to the replication factor A protein 1 family. Component of the heterotrimeric canonical replication protein A complex (RPA).

It localises to the nucleus. Functionally, as part of the replication protein A (RPA/RP-A), a single-stranded DNA-binding heterotrimeric complex, may play an essential role in DNA replication, recombination and repair. Binds and stabilizes single-stranded DNA intermediates, preventing complementary DNA reannealing and recruiting different proteins involved in DNA metabolism. In Schizosaccharomyces pombe (strain 972 / ATCC 24843) (Fission yeast), this protein is Replication factor A protein 1 (ssb1).